We begin with the raw amino-acid sequence, 329 residues long: Replication factor C small subunit 1 (329 aa).

44 to 51 (GPPGTGKT) serves as a coordination point for ATP.

Belongs to the activator 1 small subunits family. RfcS subfamily. Heteromultimer composed of small subunits (RfcS) and large subunits (RfcL).

Functionally, part of the RFC clamp loader complex which loads the PCNA sliding clamp onto DNA. In Pyrobaculum islandicum (strain DSM 4184 / JCM 9189 / GEO3), this protein is Replication factor C small subunit 1.